The sequence spans 238 residues: Probable septum site-determining protein MinC (238 aa).

This sequence belongs to the MinC family. In terms of assembly, interacts with MinD and FtsZ.

Its function is as follows. Cell division inhibitor that blocks the formation of polar Z ring septums. Rapidly oscillates between the poles of the cell to destabilize FtsZ filaments that have formed before they mature into polar Z rings. Prevents FtsZ polymerization. In Xylella fastidiosa (strain M23), this protein is Probable septum site-determining protein MinC.